The chain runs to 393 residues: Glutamyl-tRNA reductase (393 aa).

Substrate-binding positions include 47–50 (TCSR), S98, 103–105 (ETD), and Q109. The Nucleophile role is filled by C48. 177-182 (GAGAVG) contributes to the NADP(+) binding site.

It belongs to the glutamyl-tRNA reductase family. As to quaternary structure, homodimer.

The catalysed reaction is (S)-4-amino-5-oxopentanoate + tRNA(Glu) + NADP(+) = L-glutamyl-tRNA(Glu) + NADPH + H(+). Its pathway is porphyrin-containing compound metabolism; protoporphyrin-IX biosynthesis; 5-aminolevulinate from L-glutamyl-tRNA(Glu): step 1/2. Functionally, catalyzes the NADPH-dependent reduction of glutamyl-tRNA(Glu) to glutamate 1-semialdehyde (GSA). The chain is Glutamyl-tRNA reductase from Pyrobaculum neutrophilum (strain DSM 2338 / JCM 9278 / NBRC 100436 / V24Sta) (Thermoproteus neutrophilus).